The primary structure comprises 274 residues: Large ribosomal subunit protein uL2cz/uL2cy (274 aa).

2 disordered regions span residues Met1–Gln21 and Pro225–Lys274.

The protein belongs to the universal ribosomal protein uL2 family. As to quaternary structure, part of the 50S ribosomal subunit.

The protein localises to the plastid. It localises to the chloroplast. The polypeptide is Large ribosomal subunit protein uL2cz/uL2cy (rpl2-A) (Arabidopsis thaliana (Mouse-ear cress)).